The chain runs to 489 residues: COX3 mRNA-specific translational activator PET494 (489 aa).

Its subcellular location is the mitochondrion inner membrane. Functionally, required for the expression of the mitochondrial gene for cytochrome c oxidase subunit III (COX3). This Saccharomyces cerevisiae (strain ATCC 204508 / S288c) (Baker's yeast) protein is COX3 mRNA-specific translational activator PET494 (PET494).